A 482-amino-acid polypeptide reads, in one-letter code: NADH-quinone oxidoreductase subunit D (482 aa).

Low complexity predominate over residues 1–16; it reads MTTNTSTSSTTDDLTT. The tract at residues 1–48 is disordered; sequence MTTNTSTSSTTDDLTTGAPNGTGAPDGANGVGGPTGTVGGPGEHPAYE. Gly residues predominate over residues 29–42; that stretch reads NGVGGPTGTVGGPG.

The protein belongs to the complex I 49 kDa subunit family. NDH-1 is composed of 14 different subunits. Subunits NuoB, C, D, E, F, and G constitute the peripheral sector of the complex.

It localises to the cell membrane. The catalysed reaction is a quinone + NADH + 5 H(+)(in) = a quinol + NAD(+) + 4 H(+)(out). In terms of biological role, NDH-1 shuttles electrons from NADH, via FMN and iron-sulfur (Fe-S) centers, to quinones in the respiratory chain. The immediate electron acceptor for the enzyme in this species is believed to be a menaquinone. Couples the redox reaction to proton translocation (for every two electrons transferred, four hydrogen ions are translocated across the cytoplasmic membrane), and thus conserves the redox energy in a proton gradient. The sequence is that of NADH-quinone oxidoreductase subunit D from Frankia casuarinae (strain DSM 45818 / CECT 9043 / HFP020203 / CcI3).